We begin with the raw amino-acid sequence, 283 residues long: 4-diphosphocytidyl-2-C-methyl-D-erythritol kinase (283 aa).

Lys10 is a catalytic residue. An ATP-binding site is contributed by 99-109 (PMGGGLGGGSS). Asp141 is a catalytic residue.

The protein belongs to the GHMP kinase family. IspE subfamily. As to quaternary structure, homodimer.

The enzyme catalyses 4-CDP-2-C-methyl-D-erythritol + ATP = 4-CDP-2-C-methyl-D-erythritol 2-phosphate + ADP + H(+). It functions in the pathway isoprenoid biosynthesis; isopentenyl diphosphate biosynthesis via DXP pathway; isopentenyl diphosphate from 1-deoxy-D-xylulose 5-phosphate: step 3/6. Functionally, catalyzes the phosphorylation of the position 2 hydroxy group of 4-diphosphocytidyl-2C-methyl-D-erythritol. This is 4-diphosphocytidyl-2-C-methyl-D-erythritol kinase from Escherichia coli O81 (strain ED1a).